Here is a 157-residue protein sequence, read N- to C-terminus: Peptide methionine sulfoxide reductase MsrA (157 aa).

The active site involves Cys-13.

The protein belongs to the MsrA Met sulfoxide reductase family.

The enzyme catalyses L-methionyl-[protein] + [thioredoxin]-disulfide + H2O = L-methionyl-(S)-S-oxide-[protein] + [thioredoxin]-dithiol. It catalyses the reaction [thioredoxin]-disulfide + L-methionine + H2O = L-methionine (S)-S-oxide + [thioredoxin]-dithiol. Its function is as follows. Has an important function as a repair enzyme for proteins that have been inactivated by oxidation. Catalyzes the reversible oxidation-reduction of methionine sulfoxide in proteins to methionine. This Methanococcus maripaludis (strain C6 / ATCC BAA-1332) protein is Peptide methionine sulfoxide reductase MsrA.